Reading from the N-terminus, the 583-residue chain is Pyruvate kinase isozyme A, chloroplastic (583 aa).

The transit peptide at 1-74 (MSQSLHFSPN…NSGVLYNNNN (74 aa)) directs the protein to the chloroplast. Over residues 43 to 52 (KASTSPSSSS) the composition is skewed to low complexity. Residues 43-75 (KASTSPSSSSDPQVLVADNGTGNSGVLYNNNNK) are disordered. Over residues 62–75 (GTGNSGVLYNNNNK) the composition is skewed to polar residues. R134 is a substrate binding site. Positions 136, 168, and 169 each coordinate K(+). Position 136 to 139 (136 to 139 (NMCH)) interacts with ATP. A Mg(2+)-binding site is contributed by E333. The substrate site is built by G356, D357, and S389. A Mg(2+)-binding site is contributed by D357.

It belongs to the pyruvate kinase family. In terms of assembly, oligomer of alpha and beta subunits. Requires Mg(2+) as cofactor. The cofactor is K(+).

The protein localises to the plastid. Its subcellular location is the chloroplast. The catalysed reaction is pyruvate + ATP = phosphoenolpyruvate + ADP + H(+). It participates in carbohydrate degradation; glycolysis; pyruvate from D-glyceraldehyde 3-phosphate: step 5/5. In Ricinus communis (Castor bean), this protein is Pyruvate kinase isozyme A, chloroplastic.